Reading from the N-terminus, the 229-residue chain is Type III pantothenate kinase (229 aa).

7–14 is a binding site for ATP; sequence DVGNSSVD. Residues Tyr78 and 85–88 contribute to the substrate site; that span reads GTDR. Asp87 (proton acceptor) is an active-site residue. Thr110 contributes to the ATP binding site. A substrate-binding site is contributed by Thr161.

This sequence belongs to the type III pantothenate kinase family. In terms of assembly, homodimer. It depends on NH4(+) as a cofactor. K(+) serves as cofactor.

It is found in the cytoplasm. It catalyses the reaction (R)-pantothenate + ATP = (R)-4'-phosphopantothenate + ADP + H(+). It participates in cofactor biosynthesis; coenzyme A biosynthesis; CoA from (R)-pantothenate: step 1/5. In terms of biological role, catalyzes the phosphorylation of pantothenate (Pan), the first step in CoA biosynthesis. The polypeptide is Type III pantothenate kinase (Aquifex aeolicus (strain VF5)).